The following is a 112-amino-acid chain: C-type natriuretic peptide 3 (112 aa).

An N-terminal signal peptide occupies residues 1-19 (MSLRAFMLCVCLLLQSVGA). Residues 20-90 (RPASELQNLE…SKRSWGRYKK (71 aa)) constitute a propeptide that is removed on maturation. A disordered region spans residues 33 to 67 (QDQLSSTEHPEEDRLDRTREEPQLGGSSSREAADE). Residues 40–54 (EHPEEDRLDRTREEP) show a composition bias toward basic and acidic residues. Cysteine 96 and cysteine 112 are joined by a disulfide.

It belongs to the natriuretic peptide family. In terms of tissue distribution, spinal cord, kidney, ovary, heart and spleen, and to a lower extent in brain and liver.

Its subcellular location is the secreted. In terms of biological role, exhibits natriuretic and vasodepressant activity. Has cGMP-stimulating activity. May help to regulate body fluid homeostasis in a variety of aquatic environments. The protein is C-type natriuretic peptide 3 of Oryzias latipes (Japanese rice fish).